The chain runs to 160 residues: Class II hydrophobin 8 (160 aa).

Cystine bridges form between Cys-92-Cys-141, Cys-102-Cys-132, Cys-103-Cys-115, and Cys-142-Cys-153.

Belongs to the cerato-ulmin hydrophobin family. As to quaternary structure, homodimer. Homodimers further self-assemble to form highly ordered films at water-air interfaces through intermolecular interactions.

It is found in the secreted. The protein localises to the cell wall. In terms of biological role, aerial growth, conidiation, and dispersal of filamentous fungi in the environment rely upon a capability of their secreting small amphipathic proteins called hydrophobins (HPBs) with low sequence identity. Class I can self-assemble into an outermost layer of rodlet bundles on aerial cell surfaces, conferring cellular hydrophobicity that supports fungal growth, development and dispersal; whereas Class II form highly ordered films at water-air interfaces through intermolecular interactions but contribute nothing to the rodlet structure. This is Class II hydrophobin 8 from Trichoderma asperellum (strain ATCC 204424 / CBS 433.97 / NBRC 101777).